The following is a 161-amino-acid chain: Putative pre-16S rRNA nuclease (161 aa).

This sequence belongs to the YqgF nuclease family.

The protein localises to the cytoplasm. In terms of biological role, could be a nuclease involved in processing of the 5'-end of pre-16S rRNA. The polypeptide is Putative pre-16S rRNA nuclease (Bradyrhizobium sp. (strain ORS 278)).